Here is a 244-residue protein sequence, read N- to C-terminus: MSVLDLNALNALPKVERILALAETNAQLEKLDAEGRVAWALENLPGNYVLSSSFGIQAAVSLHLVNQIRPDIPVILTDTGYLFPETYQFIDELTDKLKLNLKVYRAAESAAWQEARYGKLWEQGVEGIEKYNEINKVEPMNRALKELNAQTWFAGLRREQSGSRATLPVLAVQRGVFKVLPIIDWDNRTVYQYLQKHGLKYHPLWDQGYLSVGDTHTTRKWEPGMAEEETRFFGLKRECGLHEG.

The Nucleophile; cysteine thiosulfonate intermediate role is filled by Cys239.

This sequence belongs to the PAPS reductase family. CysH subfamily.

The protein localises to the cytoplasm. It carries out the reaction [thioredoxin]-disulfide + sulfite + adenosine 3',5'-bisphosphate + 2 H(+) = [thioredoxin]-dithiol + 3'-phosphoadenylyl sulfate. It functions in the pathway sulfur metabolism; hydrogen sulfide biosynthesis; sulfite from sulfate: step 3/3. Its function is as follows. Catalyzes the formation of sulfite from phosphoadenosine 5'-phosphosulfate (PAPS) using thioredoxin as an electron donor. The sequence is that of Phosphoadenosine 5'-phosphosulfate reductase from Klebsiella pneumoniae subsp. pneumoniae (strain ATCC 700721 / MGH 78578).